Here is a 423-residue protein sequence, read N- to C-terminus: UDP-N-acetylglucosamine 1-carboxyvinyltransferase (423 aa).

22 to 23 contributes to the phosphoenolpyruvate binding site; the sequence is KN. Residue R98 participates in UDP-N-acetyl-alpha-D-glucosamine binding. C122 acts as the Proton donor in catalysis. C122 carries the 2-(S-cysteinyl)pyruvic acid O-phosphothioketal modification. Residues 127–131, D311, and I333 each bind UDP-N-acetyl-alpha-D-glucosamine; that span reads RPVDQ.

The protein belongs to the EPSP synthase family. MurA subfamily.

The protein resides in the cytoplasm. It carries out the reaction phosphoenolpyruvate + UDP-N-acetyl-alpha-D-glucosamine = UDP-N-acetyl-3-O-(1-carboxyvinyl)-alpha-D-glucosamine + phosphate. The protein operates within cell wall biogenesis; peptidoglycan biosynthesis. In terms of biological role, cell wall formation. Adds enolpyruvyl to UDP-N-acetylglucosamine. The protein is UDP-N-acetylglucosamine 1-carboxyvinyltransferase of Stenotrophomonas maltophilia (strain R551-3).